Here is a 60-residue protein sequence, read N- to C-terminus: Large ribosomal subunit protein bL32 (60 aa).

Basic residues predominate over residues 1-16 (MAVPRRKTSPSRRGMR). The segment at 1–60 (MAVPRRKTSPSRRGMRRSADAIKKPTYVEDKDSGELRRPHHLDLKTGMYKGRQVLKKKES) is disordered. Over residues 17–44 (RSADAIKKPTYVEDKDSGELRRPHHLDL) the composition is skewed to basic and acidic residues.

Belongs to the bacterial ribosomal protein bL32 family.

The protein is Large ribosomal subunit protein bL32 of Bradyrhizobium diazoefficiens (strain JCM 10833 / BCRC 13528 / IAM 13628 / NBRC 14792 / USDA 110).